The following is a 588-amino-acid chain: L-fucose isomerase (588 aa).

Catalysis depends on proton acceptor residues Glu-335 and Asp-359. 3 residues coordinate Mn(2+): Glu-335, Asp-359, and His-525.

Belongs to the L-fucose isomerase family. Mn(2+) is required as a cofactor.

The protein localises to the cytoplasm. The enzyme catalyses L-fucose = L-fuculose. It participates in carbohydrate degradation; L-fucose degradation; L-lactaldehyde and glycerone phosphate from L-fucose: step 1/3. Functionally, converts the aldose L-fucose into the corresponding ketose L-fuculose. The protein is L-fucose isomerase of Streptococcus pneumoniae (strain JJA).